We begin with the raw amino-acid sequence, 102 residues long: Large ribosomal subunit protein uL23 (102 aa).

This sequence belongs to the universal ribosomal protein uL23 family. Part of the 50S ribosomal subunit. Contacts protein L29, and trigger factor when it is bound to the ribosome.

Its function is as follows. One of the early assembly proteins it binds 23S rRNA. One of the proteins that surrounds the polypeptide exit tunnel on the outside of the ribosome. Forms the main docking site for trigger factor binding to the ribosome. The polypeptide is Large ribosomal subunit protein uL23 (Methylobacillus flagellatus (strain ATCC 51484 / DSM 6875 / VKM B-1610 / KT)).